We begin with the raw amino-acid sequence, 606 residues long: Gastrula zinc finger protein XlCGF66.1 (606 aa).

Disordered regions lie at residues 1–31 (MGMW…RGKK) and 240–271 (TLHS…KRQK). The segment covering 242–262 (HSKDSCNEGHKHLSHKSDYNK) has biased composition (basic and acidic residues). 11 C2H2-type zinc fingers span residues 273-295 (FSCS…QKTH), 300-322 (LLCL…RQTH), 328-350 (FSCS…QITH), 384-407 (DFCS…QQVH), 413-435 (FSCT…QRTH), 441-464 (YSCS…QQVH), 470-492 (FFCS…QRTH), 498-521 (YSCS…QQVH), 527-549 (FSCS…QRTH), 555-578 (DFCF…QQVH), and 584-606 (FSCS…HRTH).

This sequence belongs to the krueppel C2H2-type zinc-finger protein family.

It localises to the nucleus. Its function is as follows. May be involved in transcriptional regulation. The protein is Gastrula zinc finger protein XlCGF66.1 of Xenopus laevis (African clawed frog).